The chain runs to 179 residues: MSDEINKTQLKNIINAILEYKRVLVYRNEINGDIDNSYVLFYNEIDSNFDILTIPFVIENLREEKEFLKFLYESELFDIDNLSKLIVDFIDYKHRPCLLKGLVYVELLDLIKQYNYQITENNINFNKNRFTGEIRYIISIDSNKTAEIIKKIEYCNFCLYDRDINVGIQKCVTYKLKYS.

This is an uncharacterized protein from Sulfolobus islandicus rod-shaped virus 1 (SIRV-1).